The primary structure comprises 325 residues: MAASCILLHTGQKMPLIGLGTWKSDPGQVKAAIKYALSVGYRHIDCAAIYGNETEIGEALKENVGPGKLVPREELFVTSKLWNTKHHPEDVEPALRKTLADLQLEYLDLYLMHWPYAFERGDSPFPKNADGTIRYDSTHYKETWRALEALVAKGLVRALGLSNFNSRQIDDVLSVASVRPAVLQVECHPYLAQNELIAHCQARNLEVTAYSPLGSSDRAWRDPEEPVLLKEPVVLALAEKHGRSPAQILLRWQVQRKVSCIPKSVTPSRILENIQVFDFTFSPEEMKQLDALNKNLRFIVPMLTVDGKRVPRDAGHPLYPFNDPY.

Position 2 is an N-acetylalanine (Ala2). Ser4 carries the phosphoserine modification. Residues 11 to 20 (GQKMPLIGLG), Thr21, and Trp22 contribute to the NADP(+) site. At Ser38 the chain carries Phosphoserine. Asp45 contributes to the NADP(+) binding site. The Proton donor role is filled by Tyr50. Lys127 is subject to N6-acetyllysine; alternate. Lys127 carries the post-translational modification N6-succinyllysine; alternate. The NADP(+) site is built by Ser162, Asn163, Ser211, Leu213, Ser215, Ser216, Lys263, Ser264, Val265, Thr266, Arg269, and Asn273. Residue Ser211 is modified to Phosphoserine.

This sequence belongs to the aldo/keto reductase family. As to quaternary structure, monomer.

It localises to the cytoplasm. Its subcellular location is the cytosol. The protein resides in the apical cell membrane. The catalysed reaction is a primary alcohol + NADP(+) = an aldehyde + NADPH + H(+). It carries out the reaction L-gulonate + NADP(+) = aldehydo-D-glucuronate + NADPH + H(+). The enzyme catalyses L-gulono-1,4-lactone + NADP(+) = D-glucurono-3,6-lactone + NADPH + H(+). It catalyses the reaction allyl alcohol + NADP(+) = acrolein + NADPH + H(+). The catalysed reaction is glycerol + NADP(+) = D-glyceraldehyde + NADPH + H(+). It carries out the reaction glycerol + NADP(+) = L-glyceraldehyde + NADPH + H(+). The enzyme catalyses hydroxyacetone + NADP(+) = methylglyoxal + NADPH + H(+). It catalyses the reaction 3-deoxyfructose + NADP(+) = 3-deoxyglucosone + NADPH + H(+). The catalysed reaction is (R)-mevalonate + NADP(+) = (R)-mevaldate + NADPH + H(+). It carries out the reaction pyridine 3-methanol + NADP(+) = pyridine-3-carbaldehyde + NADPH + H(+). The enzyme catalyses S-nitroso-CoA + NADPH + H(+) = sulfinamide-CoA + NADP(+). It catalyses the reaction S-nitrosoglutathione + NADPH + H(+) = S-(hydroxysulfenamide)glutathione + NADP(+). Functionally, catalyzes the NADPH-dependent reduction of a wide variety of carbonyl-containing compounds to their corresponding alcohols. Displays enzymatic activity towards endogenous metabolites such as aromatic and aliphatic aldehydes, ketones, monosaccharides and bile acids, with a preference for negatively charged substrates, such as glucuronate and succinic semialdehyde. Plays an important role in ascorbic acid biosynthesis by catalyzing the reduction of D-glucuronic acid and D-glucurono-gamma-lactone. Functions as a detoxifiying enzyme by reducing a range of toxic aldehydes. Reduces methylglyoxal and 3-deoxyglucosone, which are present at elevated levels under hyperglycemic conditions and are cytotoxic. Involved also in the detoxification of lipid-derived aldehydes like acrolein. Plays a role in the activation of procarcinogens, such as polycyclic aromatic hydrocarbon trans-dihydrodiols, and in the metabolism of various xenobiotics and drugs. Also acts as an inhibitor of protein S-nitrosylation by mediating degradation of S-nitroso-coenzyme A (S-nitroso-CoA), a cofactor required to S-nitrosylate proteins. S-nitroso-CoA reductase activity is involved in reprogramming intermediary metabolism in renal proximal tubules, notably by inhibiting protein S-nitrosylation of isoform 2 of PKM (PKM2). Also acts as a S-nitroso-glutathione reductase by catalyzing the NADPH-dependent reduction of S-nitrosoglutathione. Displays no reductase activity towards retinoids. The polypeptide is Aldo-keto reductase family 1 member A1 (Bos taurus (Bovine)).